A 151-amino-acid polypeptide reads, in one-letter code: Neuroglobin (151 aa).

The Globin domain occupies 1–149; that stretch reads MERPEQELIR…VVQAMSRGWD (149 aa). The heme b site is built by histidine 64 and histidine 96.

It belongs to the globin family. As to quaternary structure, monomer. Homodimer and homotetramer; disulfide-linked. Mainly monomeric but also detected as part of homodimers and homotetramers. Interacts with 14-3-3 proteins; regulates the phosphorylation of NGB. Could interact (ferrous form) with G-alpha(i) proteins (GTP-bound form). In terms of processing, phosphorylated during hypoxia by ERK1/ERK2. Phosphorylation regulates the heme pocket hexacoordination preventing the association of His-64 with the heme metal center. Thereby, promotes the access of dioxygen and nitrite to the heme and stimulates the nitrite reductase activity. Phosphorylation during hypoxia is stabilized by 14-3-3 proteins.

It is found in the cytoplasm. It localises to the cytosol. Its subcellular location is the mitochondrion matrix. It carries out the reaction Fe(III)-heme b-[protein] + nitric oxide + H2O = Fe(II)-heme b-[protein] + nitrite + 2 H(+). In terms of biological role, monomeric globin with a bis-histidyl six-coordinate heme-iron atom through which it can bind dioxygen, carbon monoxide and nitric oxide. Could help transport oxygen and increase its availability to the metabolically active neuronal tissues, though its low quantity in tissues as well as its high affinity for dioxygen, which may limit its oxygen-releasing ability, argue against it. The ferrous/deoxygenated form exhibits a nitrite reductase activity and it could produce nitric oxide which in turn inhibits cellular respiration in response to hypoxia. In its ferrous/deoxygenated state, it may also exhibit GDI (Guanine nucleotide Dissociation Inhibitor) activity toward heterotrimeric G-alpha proteins, thereby regulating signal transduction to facilitate neuroprotective responses in the wake of hypoxia and associated oxidative stress. This chain is Neuroglobin, found in Oryctolagus cuniculus (Rabbit).